A 321-amino-acid chain; its full sequence is tRNA U34 carboxymethyltransferase (321 aa).

Carboxy-S-adenosyl-L-methionine contacts are provided by residues Lys-90, Trp-104, Lys-109, Gly-129, 151 to 153 (DPT), 180 to 181 (IE), Met-195, Tyr-199, and Arg-314.

The protein belongs to the class I-like SAM-binding methyltransferase superfamily. CmoB family. Homotetramer.

The catalysed reaction is carboxy-S-adenosyl-L-methionine + 5-hydroxyuridine(34) in tRNA = 5-carboxymethoxyuridine(34) in tRNA + S-adenosyl-L-homocysteine + H(+). Catalyzes carboxymethyl transfer from carboxy-S-adenosyl-L-methionine (Cx-SAM) to 5-hydroxyuridine (ho5U) to form 5-carboxymethoxyuridine (cmo5U) at position 34 in tRNAs. The chain is tRNA U34 carboxymethyltransferase from Histophilus somni (strain 2336) (Haemophilus somnus).